Here is a 652-residue protein sequence, read N- to C-terminus: MSTRRETRAQAQQFIDNLKPLQHPNSEKVYLVGSRDDIRVGMRQIHQSETMIGGTESHPVLESNPPLKVYDCAGPYSDPNAKINVREGLDKFRANWILERNDTEQLIAASSGFTQQRLADYGLDHLRFDSLLSPRKAKQGQCVTQLHYARQGIVTPEMEYIAIRENMALSEVTDEALTQKAEGESFGAAISQPITPEFVRQEVARGRAIIPLNINHPEAEPMIIGRNFLVKVNANIGNSAVTSSIEEEVEKLVWSTRWGADTVMDLSTGRYIHETREWIIRNSPVPIGTVPIYQALEKVNGVAEDLTWEIFRDTLLEQAEQGVDYFTIHAGVLLRYVPMTAKRLTGIVSRGGSIMAKWCLSHHLENFLYEHFRDICELCAAYDVSLSLGDGMRPGSIADANDEAQFSELETLGELVKIAWEYDVQTIIEGPGHIPMNLIKENMDKQLEVCDEAPFYTLGPQTTDIAPGYDHFTSGIGAAMIAWYGCAMLCYVTPKEHLGLPNKEDVKQGLITYKIAAHAGDVAKGHPTAQIRDNALSKARFEFRWEDQYNLGLDPDTARAYHDESLPQESAKVAHFCSMCGPKFCSMKISQEVREYAAAQEVKLHTDTEFKAKSVKESGMAQMSAEFKAKGAALYHESGALVEDVELVETEG.

Residues Asn-235, Met-264, Tyr-293, His-329, 349 to 351 (SRG), 390 to 393 (DGMR), and Glu-429 each bind substrate. His-433 is a Zn(2+) binding site. Residue Tyr-456 coordinates substrate. His-497 contributes to the Zn(2+) binding site. [4Fe-4S] cluster is bound by residues Cys-577, Cys-580, and Cys-585.

This sequence belongs to the ThiC family. Homodimer. Requires [4Fe-4S] cluster as cofactor.

The enzyme catalyses 5-amino-1-(5-phospho-beta-D-ribosyl)imidazole + S-adenosyl-L-methionine = 4-amino-2-methyl-5-(phosphooxymethyl)pyrimidine + CO + 5'-deoxyadenosine + formate + L-methionine + 3 H(+). It participates in cofactor biosynthesis; thiamine diphosphate biosynthesis. Catalyzes the synthesis of the hydroxymethylpyrimidine phosphate (HMP-P) moiety of thiamine from aminoimidazole ribotide (AIR) in a radical S-adenosyl-L-methionine (SAM)-dependent reaction. In Shewanella sediminis (strain HAW-EB3), this protein is Phosphomethylpyrimidine synthase.